The following is a 79-amino-acid chain: Acyl carrier protein (79 aa).

Residues 2–77 form the Carrier domain; sequence STIEERVKKI…QAIDYVKAHV (76 aa). Serine 37 bears the O-(pantetheine 4'-phosphoryl)serine mark.

This sequence belongs to the acyl carrier protein (ACP) family. Post-translationally, 4'-phosphopantetheine is transferred from CoA to a specific serine of apo-ACP by AcpS. This modification is essential for activity because fatty acids are bound in thioester linkage to the sulfhydryl of the prosthetic group.

The protein resides in the cytoplasm. The protein operates within lipid metabolism; fatty acid biosynthesis. Carrier of the growing fatty acid chain in fatty acid biosynthesis. The chain is Acyl carrier protein from Xanthomonas axonopodis pv. citri (strain 306).